Consider the following 341-residue polypeptide: UPF0283 membrane protein HD_1769 (341 aa).

The next 3 helical transmembrane spans lie at 57–77 (LLAV…QCLI), 86–106 (IDLA…GAII), and 204–224 (ENAI…MIAW).

The protein belongs to the UPF0283 family.

It localises to the cell inner membrane. This chain is UPF0283 membrane protein HD_1769, found in Haemophilus ducreyi (strain 35000HP / ATCC 700724).